A 109-amino-acid chain; its full sequence is Ribonuclease P protein component (109 aa).

Belongs to the RnpA family. Consists of a catalytic RNA component (M1 or rnpB) and a protein subunit.

It carries out the reaction Endonucleolytic cleavage of RNA, removing 5'-extranucleotides from tRNA precursor.. RNaseP catalyzes the removal of the 5'-leader sequence from pre-tRNA to produce the mature 5'-terminus. It can also cleave other RNA substrates such as 4.5S RNA. The protein component plays an auxiliary but essential role in vivo by binding to the 5'-leader sequence and broadening the substrate specificity of the ribozyme. The chain is Ribonuclease P protein component from Mycoplasma capricolum subsp. capricolum (strain California kid / ATCC 27343 / NCTC 10154).